Here is a 369-residue protein sequence, read N- to C-terminus: 3-dehydroquinate synthase (369 aa).

NAD(+) contacts are provided by residues 70 to 75 (DAEDGK), 104 to 108 (GAATD), 128 to 129 (TT), K141, K150, and 168 to 171 (TLET). E183, H246, and H262 together coordinate Zn(2+).

Belongs to the sugar phosphate cyclases superfamily. Dehydroquinate synthase family. Co(2+) is required as a cofactor. The cofactor is Zn(2+). NAD(+) serves as cofactor.

The protein resides in the cytoplasm. The enzyme catalyses 7-phospho-2-dehydro-3-deoxy-D-arabino-heptonate = 3-dehydroquinate + phosphate. The protein operates within metabolic intermediate biosynthesis; chorismate biosynthesis; chorismate from D-erythrose 4-phosphate and phosphoenolpyruvate: step 2/7. Its function is as follows. Catalyzes the conversion of 3-deoxy-D-arabino-heptulosonate 7-phosphate (DAHP) to dehydroquinate (DHQ). The protein is 3-dehydroquinate synthase of Rhodococcus erythropolis (strain PR4 / NBRC 100887).